The chain runs to 303 residues: Probable cell division protein WhiA (303 aa).

A DNA-binding region (H-T-H motif) is located at residues 272–303 (SIQQLADSLSTPLTKSGVNHRLRKINKIADEL).

Belongs to the WhiA family.

Involved in cell division and chromosome segregation. In Streptococcus pneumoniae serotype 4 (strain ATCC BAA-334 / TIGR4), this protein is Probable cell division protein WhiA.